Consider the following 342-residue polypeptide: Holliday junction branch migration complex subunit RuvB (342 aa).

The tract at residues 1–179 (MTSILSPEKS…FGIPMRLNFY (179 aa)) is large ATPase domain (RuvB-L). ATP contacts are provided by residues L18, R19, G60, K63, T64, T65, 126-128 (EDF), R169, Y179, and R216. T64 is a Mg(2+) binding site. The tract at residues 180-250 (NTEELKKVLN…IANFGLNRLE (71 aa)) is small ATPAse domain (RuvB-S). The segment at 253–342 (IIGLDSNDYR…HQFNIFNDNE (90 aa)) is head domain (RuvB-H). Positions 289, 308, and 313 each coordinate DNA.

Belongs to the RuvB family. As to quaternary structure, homohexamer. Forms an RuvA(8)-RuvB(12)-Holliday junction (HJ) complex. HJ DNA is sandwiched between 2 RuvA tetramers; dsDNA enters through RuvA and exits via RuvB. An RuvB hexamer assembles on each DNA strand where it exits the tetramer. Each RuvB hexamer is contacted by two RuvA subunits (via domain III) on 2 adjacent RuvB subunits; this complex drives branch migration. In the full resolvosome a probable DNA-RuvA(4)-RuvB(12)-RuvC(2) complex forms which resolves the HJ.

It localises to the cytoplasm. The catalysed reaction is ATP + H2O = ADP + phosphate + H(+). Functionally, the RuvA-RuvB-RuvC complex processes Holliday junction (HJ) DNA during genetic recombination and DNA repair, while the RuvA-RuvB complex plays an important role in the rescue of blocked DNA replication forks via replication fork reversal (RFR). RuvA specifically binds to HJ cruciform DNA, conferring on it an open structure. The RuvB hexamer acts as an ATP-dependent pump, pulling dsDNA into and through the RuvAB complex. RuvB forms 2 homohexamers on either side of HJ DNA bound by 1 or 2 RuvA tetramers; 4 subunits per hexamer contact DNA at a time. Coordinated motions by a converter formed by DNA-disengaged RuvB subunits stimulates ATP hydrolysis and nucleotide exchange. Immobilization of the converter enables RuvB to convert the ATP-contained energy into a lever motion, pulling 2 nucleotides of DNA out of the RuvA tetramer per ATP hydrolyzed, thus driving DNA branch migration. The RuvB motors rotate together with the DNA substrate, which together with the progressing nucleotide cycle form the mechanistic basis for DNA recombination by continuous HJ branch migration. Branch migration allows RuvC to scan DNA until it finds its consensus sequence, where it cleaves and resolves cruciform DNA. The protein is Holliday junction branch migration complex subunit RuvB of Rickettsia bellii (strain RML369-C).